Here is a 343-residue protein sequence, read N- to C-terminus: Geranylgeranyl pyrophosphate synthase (343 aa).

Over residues 1–12 (MAYTVEPREHSK) the composition is skewed to basic and acidic residues. Positions 1 to 26 (MAYTVEPREHSKNTTLPTVAMPPSPP) are disordered. Isopentenyl diphosphate is bound by residues lysine 69, arginine 72, and histidine 101. 2 residues coordinate Mg(2+): aspartate 108 and aspartate 112. Arginine 117 is a binding site for dimethylallyl diphosphate. Position 118 (arginine 118) interacts with isopentenyl diphosphate. Residues threonine 196 and glutamine 229 each coordinate dimethylallyl diphosphate. Aspartate 232 provides a ligand contact to Mg(2+). 3 residues coordinate dimethylallyl diphosphate: asparagine 236, lysine 246, and lysine 256.

Belongs to the FPP/GGPP synthase family. Requires Mg(2+) as cofactor.

It catalyses the reaction isopentenyl diphosphate + dimethylallyl diphosphate = (2E)-geranyl diphosphate + diphosphate. The enzyme catalyses isopentenyl diphosphate + (2E)-geranyl diphosphate = (2E,6E)-farnesyl diphosphate + diphosphate. It carries out the reaction isopentenyl diphosphate + (2E,6E)-farnesyl diphosphate = (2E,6E,10E)-geranylgeranyl diphosphate + diphosphate. It functions in the pathway mycotoxin biosynthesis. In terms of biological role, geranylgeranyl pyrophosphate synthase; part of the gene cluster that mediates the biosynthesis of aphidicolin, a specific inhibitor of eukaryotic DNA synthesis and DNA polymerase alpha. The geranylgeranyl pyrophosphate synthase GGS is required for supplying a sufficient amount of geranylgeranyl diphosphate (GGDP), the general precursor of diterpenes. The diterpene synthase ACS then catalyzes the conversion of geranylgeranyl diphosphate to aphidicolan-16-beta-ol via the intermediate syn-copalyldiphosphate (syn-CDP). In addition to aphidicolan-16-beta-ol, the enzyme also produces low levels of amphidicol-15-ene and amphidicol-16-ene. The cytochrome P450 monooxygenase P450-2 then catalyzes the two-step hydroxylation from aphidicolan-16-beta-ol to 3-deoxyaphidicolin via a 17,3-deoxyaphidicolin intermediate. Finally, the cytochrome P450 monooxygenase P450-1 converts 3-deoxyaphidicolin to aphidicolin. This is Geranylgeranyl pyrophosphate synthase (GGS) from Neocamarosporium betae (Beet black rot fungus).